Consider the following 341-residue polypeptide: Phenylalanine--tRNA ligase alpha subunit (341 aa).

Glutamate 259 contributes to the Mg(2+) binding site.

This sequence belongs to the class-II aminoacyl-tRNA synthetase family. Phe-tRNA synthetase alpha subunit type 1 subfamily. In terms of assembly, tetramer of two alpha and two beta subunits. Mg(2+) serves as cofactor.

It is found in the cytoplasm. It carries out the reaction tRNA(Phe) + L-phenylalanine + ATP = L-phenylalanyl-tRNA(Phe) + AMP + diphosphate + H(+). The sequence is that of Phenylalanine--tRNA ligase alpha subunit from Mycobacterium tuberculosis (strain ATCC 25177 / H37Ra).